A 154-amino-acid chain; its full sequence is tRNA-splicing endonuclease (154 aa).

Catalysis depends on residues tyrosine 86, histidine 102, and lysine 133.

It belongs to the tRNA-intron endonuclease family. Archaeal short subfamily. In terms of assembly, homotetramer; although the tetramer contains four active sites, only two participate in the cleavage. Therefore, it should be considered as a dimer of dimers.

The enzyme catalyses pretRNA = a 3'-half-tRNA molecule with a 5'-OH end + a 5'-half-tRNA molecule with a 2',3'-cyclic phosphate end + an intron with a 2',3'-cyclic phosphate and a 5'-hydroxyl terminus.. Its function is as follows. Endonuclease that removes tRNA introns. Cleaves pre-tRNA at the 5'- and 3'-splice sites to release the intron. The products are an intron and two tRNA half-molecules bearing 2',3' cyclic phosphate and 5'-OH termini. Recognizes a pseudosymmetric substrate in which 2 bulged loops of 3 bases are separated by a stem of 4 bp. This Nanoarchaeum equitans (strain Kin4-M) protein is tRNA-splicing endonuclease.